The primary structure comprises 164 residues: Putative 4-hydroxy-4-methyl-2-oxoglutarate aldolase (164 aa).

Residues 79-82 (GDRL) and Arg101 contribute to the substrate site. Asp102 is a binding site for a divalent metal cation.

The protein belongs to the class II aldolase/RraA-like family. Homotrimer. A divalent metal cation is required as a cofactor.

It catalyses the reaction 4-hydroxy-4-methyl-2-oxoglutarate = 2 pyruvate. It carries out the reaction oxaloacetate + H(+) = pyruvate + CO2. Functionally, catalyzes the aldol cleavage of 4-hydroxy-4-methyl-2-oxoglutarate (HMG) into 2 molecules of pyruvate. Also contains a secondary oxaloacetate (OAA) decarboxylase activity due to the common pyruvate enolate transition state formed following C-C bond cleavage in the retro-aldol and decarboxylation reactions. The polypeptide is Putative 4-hydroxy-4-methyl-2-oxoglutarate aldolase (Halorhodospira halophila (strain DSM 244 / SL1) (Ectothiorhodospira halophila (strain DSM 244 / SL1))).